Reading from the N-terminus, the 606-residue chain is EPM2A-interacting protein 1 (606 aa).

Ser147 carries the post-translational modification Phosphoserine.

Interacts with EPM2A.

Its subcellular location is the endoplasmic reticulum. The sequence is that of EPM2A-interacting protein 1 (Epm2aip1) from Mus musculus (Mouse).